The primary structure comprises 320 residues: o-succinylbenzoate synthase (320 aa).

The active-site Proton donor is the K133. Residues D161, E190, and D213 each coordinate Mg(2+). Residue K235 is the Proton acceptor of the active site.

Belongs to the mandelate racemase/muconate lactonizing enzyme family. MenC type 1 subfamily. It depends on a divalent metal cation as a cofactor.

It catalyses the reaction (1R,6R)-6-hydroxy-2-succinyl-cyclohexa-2,4-diene-1-carboxylate = 2-succinylbenzoate + H2O. The protein operates within quinol/quinone metabolism; 1,4-dihydroxy-2-naphthoate biosynthesis; 1,4-dihydroxy-2-naphthoate from chorismate: step 4/7. It functions in the pathway quinol/quinone metabolism; menaquinone biosynthesis. Converts 2-succinyl-6-hydroxy-2,4-cyclohexadiene-1-carboxylate (SHCHC) to 2-succinylbenzoate (OSB). The polypeptide is o-succinylbenzoate synthase (Escherichia coli O45:K1 (strain S88 / ExPEC)).